Reading from the N-terminus, the 517-residue chain is Protein ERGIC-53 (517 aa).

The signal sequence occupies residues 1-30; sequence MAVSRRRVPQAGARSFFCALLLSFSQFTGS. Topologically, residues 31 to 484 are lumenal; it reads DGTGGDAAAP…DLPPFPSCLS (454 aa). The region spanning 52–275 is the L-type lectin-like domain; sequence RRFEYKYSFK…DVLSFLTFQL (224 aa). Residues S96 and D129 each contribute to the a carbohydrate site. The Ca(2+) site is built by D160, F162, and N164. The a carbohydrate site is built by N164 and H186. D189 provides a ligand contact to Ca(2+). Cysteines 198 and 238 form a disulfide. Residue 259 to 261 coordinates a carbohydrate; that stretch reads GGL. At S433 the chain carries Phosphoserine. A helical membrane pass occupies residues 485-505; sequence TIHFVIFVVVQTVLFVGYIMY. Topologically, residues 506–517 are cytoplasmic; the sequence is RTQQEAAAKKFF. Positions 506 to 517 are mediates interaction with RAB3GAP1, RAB3GAP2 and UBXN6; sequence RTQQEAAAKKFF. The ER export motif signature appears at 516–517; the sequence is FF.

Exists both as a covalent disulfide-linked homohexamer, and a complex of three disulfide-linked dimers non-covalently kept together. Interacts with MCFD2. May interact with TMEM115. Interacts with RAB3GAP1 and RAB3GAP2. Interacts with UBXN6. Interacts with SERPINA1/alpha1-antitrypsin. Interacts with BET1.

It localises to the endoplasmic reticulum-Golgi intermediate compartment membrane. Its subcellular location is the golgi apparatus membrane. The protein localises to the endoplasmic reticulum membrane. Mannose-specific lectin. May recognize sugar residues of glycoproteins, glycolipids, or glycosylphosphatidyl inositol anchors and may be involved in the sorting or recycling of proteins, lipids, or both. The LMAN1-MCFD2 complex forms a specific cargo receptor for the ER-to-Golgi transport of selected proteins. The protein is Protein ERGIC-53 (Lman1) of Mus musculus (Mouse).